Here is a 114-residue protein sequence, read N- to C-terminus: MSDETVLPLQFTEAAAKKVKLLISDEENPNLKLRVYITGGGCSGFQYGFTFDDQINDGDMTIEKQGVELVVDPMSLQYLVGGAVDYTEGLEGSRFIVTNPNAKSTCGCGSSFSI.

Iron-sulfur cluster-binding residues include Cys-42, Cys-106, and Cys-108.

Belongs to the HesB/IscA family. In terms of assembly, homodimer. The cofactor is iron-sulfur cluster.

Required for insertion of 4Fe-4S clusters for at least IspG. This is Iron-sulfur cluster insertion protein ErpA from Yersinia enterocolitica serotype O:8 / biotype 1B (strain NCTC 13174 / 8081).